The chain runs to 760 residues: Alpha-amylase (760 aa).

An N-terminal signal peptide occupies residues 1-34 (MSKRSKLLKRRMLSLSVICVLIGYGPVFNPVRSQ). Ca(2+) contacts are provided by Asn143, Thr184, and Asp192. Asp222 acts as the Nucleophile in catalysis. His226 contributes to the Ca(2+) binding site. The active-site Proton donor is Glu262.

It belongs to the glycosyl hydrolase 13 family. Monomer. Ca(2+) is required as a cofactor.

It catalyses the reaction Endohydrolysis of (1-&gt;4)-alpha-D-glucosidic linkages in polysaccharides containing three or more (1-&gt;4)-alpha-linked D-glucose units.. This chain is Alpha-amylase (amyA), found in Clostridium acetobutylicum (strain ATCC 824 / DSM 792 / JCM 1419 / IAM 19013 / LMG 5710 / NBRC 13948 / NRRL B-527 / VKM B-1787 / 2291 / W).